The following is a 428-amino-acid chain: Isocitrate dehydrogenase [NADP], mitochondrial (428 aa).

Residues 1 to 16 (MSMLSRRLFSTSRLAA) constitute a mitochondrion transit peptide. Residues 91–93 (TIT) and Arg-98 each bind NADP(+). Thr-93 is a binding site for substrate. Residues 110 to 116 (SPNGTIR), Arg-125, and Arg-148 contribute to the substrate site. Mn(2+) is bound at residue Asp-269. NADP(+) is bound at residue Lys-277. Asp-292 serves as a coordination point for Mn(2+). NADP(+)-binding positions include 327–332 (GTVTRH) and Asn-345.

This sequence belongs to the isocitrate and isopropylmalate dehydrogenases family. Homodimer. Mg(2+) is required as a cofactor. The cofactor is Mn(2+).

Its subcellular location is the mitochondrion. It catalyses the reaction D-threo-isocitrate + NADP(+) = 2-oxoglutarate + CO2 + NADPH. With respect to regulation, the enzyme is subject to end product inhibition by NADPH and 2-oxoglutarate. Mitochondrial IDP1 may regulate flux through the tricarboxylic acid cycle and respiration. Its probably critical function is the production of NADPH. The chain is Isocitrate dehydrogenase [NADP], mitochondrial (IDP1) from Saccharomyces cerevisiae (strain ATCC 204508 / S288c) (Baker's yeast).